We begin with the raw amino-acid sequence, 33 residues long: Gastrin (33 aa).

The residue at position 1 (Q1) is a Pyrrolidone carboxylic acid. F33 carries the post-translational modification Phenylalanine amide.

It belongs to the gastrin/cholecystokinin family.

It is found in the secreted. In terms of biological role, gastrin stimulates the stomach mucosa to produce and secrete hydrochloric acid and the pancreas to secrete its digestive enzymes. It also stimulates smooth muscle contraction and increases blood circulation and water secretion in the stomach and intestine. This is Gastrin (GAST) from Cavia porcellus (Guinea pig).